The following is a 437-amino-acid chain: Glycogen synthase (437 aa).

K15 serves as a coordination point for ADP-alpha-D-glucose.

It belongs to the glycosyltransferase 1 family. Bacterial/plant glycogen synthase subfamily.

The enzyme catalyses [(1-&gt;4)-alpha-D-glucosyl](n) + ADP-alpha-D-glucose = [(1-&gt;4)-alpha-D-glucosyl](n+1) + ADP + H(+). It participates in glycan biosynthesis; glycogen biosynthesis. Synthesizes alpha-1,4-glucan chains using ADP-glucose. The sequence is that of Glycogen synthase from Thermus thermophilus (strain ATCC 27634 / DSM 579 / HB8).